We begin with the raw amino-acid sequence, 375 residues long: Fructose-1,6-bisphosphate aldolase/phosphatase (375 aa).

Catalysis depends on aspartate 15, which acts as the Proton acceptor; for FBP phosphatase activity. Aspartate 15, histidine 22, aspartate 56, and aspartate 57 together coordinate Mg(2+). Histidine 22 contacts beta-D-fructose 1,6-bisphosphate. Histidine 22 lines the dihydroxyacetone phosphate pocket. Tyrosine 94 provides a ligand contact to beta-D-fructose 1,6-bisphosphate. Glutamine 98 is a binding site for Mg(2+). Position 107–108 (glycine 107–asparagine 108) interacts with beta-D-fructose 1,6-bisphosphate. Position 135 (aspartate 135) interacts with Mg(2+). Lysine 136 serves as a coordination point for beta-D-fructose 1,6-bisphosphate. Lysine 136 provides a ligand contact to dihydroxyacetone phosphate. Tyrosine 237 acts as the Proton donor/acceptor; for FBP aldolase activity in catalysis. Mg(2+)-binding residues include lysine 240, aspartate 241, and aspartate 242. Residue lysine 240 is the Schiff-base intermediate with DHAP; for FBP aldolase activity of the active site. Beta-D-fructose 1,6-bisphosphate-binding positions include glutamine 250 to serine 251, arginine 274, aspartate 295, and tyrosine 357. Dihydroxyacetone phosphate contacts are provided by arginine 274 and aspartate 295.

It belongs to the FBP aldolase/phosphatase family. Homooctamer; dimer of tetramers. Mg(2+) serves as cofactor.

It carries out the reaction beta-D-fructose 1,6-bisphosphate = D-glyceraldehyde 3-phosphate + dihydroxyacetone phosphate. It catalyses the reaction beta-D-fructose 1,6-bisphosphate + H2O = beta-D-fructose 6-phosphate + phosphate. It participates in carbohydrate biosynthesis; gluconeogenesis. Its activity is regulated as follows. FBPase activity is inhibited by Ca(2+), ATP, ADP and phosphoenolpyruvate. Catalyzes two subsequent steps in gluconeogenesis: the aldol condensation of dihydroxyacetone phosphate (DHAP) and glyceraldehyde-3-phosphate (GA3P) to fructose-1,6-bisphosphate (FBP), and the dephosphorylation of FBP to fructose-6-phosphate (F6P). Can also dephosphorylate, with lower activity, other related substrates including fructose-1-phosphate, fructose-6-phosphate, glucose-1-phosphate, glucose-6-phosphate, glycerol-2-phosphate, phosphoenolpyruvate, 5'-AMP, 6'-ADP and 7'-ATP. The protein is Fructose-1,6-bisphosphate aldolase/phosphatase of Thermococcus onnurineus (strain NA1).